Consider the following 346-residue polypeptide: MERKFMSLQPSISVSEMEPNGTFSNNNSRNCTIENFKREFFPIVYLIIFFWGVLGNGLSIYVFLQPYKKSTSVNVFMLNLAISDLLFISTLPFRADYYLRGSNWIFGDLACRIMSYSLYVNMYSSIYFLTVLSVVRFLAMVHPFRLLHVTSIRSAWILCGIIWILIMASSIMLLDSGSEQNGSVTSCLELNLYKIAKLQTMNYIALVVGCLLPFFTLSICYLLIIRVLLKVEVPESGLRVSHRKALTTIIITLIIFFLCFLPYHTLRTVHLTTWKVGLCKDRLHKALVITLALAAANACFNPLLYYFAGENFKDRLKSALRKGHPQKAKTKCVFPVSVWLRKETRV.

The Extracellular segment spans residues 1–42; the sequence is MERKFMSLQPSISVSEMEPNGTFSNNNSRNCTIENFKREFFP. 3 N-linked (GlcNAc...) asparagine glycosylation sites follow: N20, N26, and N30. Residues 43 to 63 traverse the membrane as a helical segment; the sequence is IVYLIIFFWGVLGNGLSIYVF. Topologically, residues 64–72 are cytoplasmic; it reads LQPYKKSTS. The helical transmembrane segment at 73 to 93 threads the bilayer; sequence VNVFMLNLAISDLLFISTLPF. Residues 94 to 123 are Extracellular-facing; sequence RADYYLRGSNWIFGDLACRIMSYSLYVNMY. An intrachain disulfide couples C111 to C187. A helical transmembrane segment spans residues 124–144; that stretch reads SSIYFLTVLSVVRFLAMVHPF. Residues 145–153 are Cytoplasmic-facing; the sequence is RLLHVTSIR. A helical membrane pass occupies residues 154-174; the sequence is SAWILCGIIWILIMASSIMLL. Residues 175–204 are Extracellular-facing; that stretch reads DSGSEQNGSVTSCLELNLYKIAKLQTMNYI. N181 carries an N-linked (GlcNAc...) asparagine glycan. The chain crosses the membrane as a helical span at residues 205–225; the sequence is ALVVGCLLPFFTLSICYLLII. Residues 226 to 245 are Cytoplasmic-facing; that stretch reads RVLLKVEVPESGLRVSHRKA. A helical membrane pass occupies residues 246–266; it reads LTTIIITLIIFFLCFLPYHTL. The Extracellular segment spans residues 267 to 286; sequence RTVHLTTWKVGLCKDRLHKA. A helical membrane pass occupies residues 287–307; sequence LVITLALAAANACFNPLLYYF. Residues 308–346 lie on the Cytoplasmic side of the membrane; it reads AGENFKDRLKSALRKGHPQKAKTKCVFPVSVWLRKETRV.

Belongs to the G-protein coupled receptor 1 family. In terms of tissue distribution, widely expressed, with highest levels in the heart, placenta, spleen, peripheral blood leukocytes and adrenal gland. In lung, expressed in the interstitial macrophages, and slightly in smooth muscle cells.

The protein localises to the cell membrane. In terms of biological role, receptor for cysteinyl leukotrienes. The response is mediated via a G-protein that activates a phosphatidylinositol-calcium second messenger system. Stimulation by BAY u9773, a partial agonist, induces specific contractions of pulmonary veins and might also have an indirect role in the relaxation of the pulmonary vascular endothelium. The rank order of affinities for the leukotrienes is LTC4 = LTD4 &gt;&gt; LTE4. The sequence is that of Cysteinyl leukotriene receptor 2 (CYSLTR2) from Homo sapiens (Human).